Consider the following 130-residue polypeptide: Large ribosomal subunit protein eL22 (130 aa).

The disordered stretch occupies residues 1-21 (MPGKTAQKGGRPSGKGKKKKQ). Positions 17 to 20 (KKKK) match the Nuclear localization signal motif.

The protein belongs to the eukaryotic ribosomal protein eL22 family.

The protein is Large ribosomal subunit protein eL22 (RPL22) of Tripneustes gratilla (Hawaian sea urchin).